Consider the following 120-residue polypeptide: Large ribosomal subunit protein uL18 (120 aa).

Belongs to the universal ribosomal protein uL18 family. In terms of assembly, part of the 50S ribosomal subunit; part of the 5S rRNA/L5/L18/L25 subcomplex. Contacts the 5S and 23S rRNAs.

This is one of the proteins that bind and probably mediate the attachment of the 5S RNA into the large ribosomal subunit, where it forms part of the central protuberance. The polypeptide is Large ribosomal subunit protein uL18 (Rhizobium meliloti (strain 1021) (Ensifer meliloti)).